A 151-amino-acid chain; its full sequence is Deoxyuridine 5'-triphosphate nucleotidohydrolase (151 aa).

Substrate contacts are provided by residues 70–72 (RSG), Asn-83, 87–89 (LID), and Met-97.

This sequence belongs to the dUTPase family. It depends on Mg(2+) as a cofactor.

The enzyme catalyses dUTP + H2O = dUMP + diphosphate + H(+). Its pathway is pyrimidine metabolism; dUMP biosynthesis; dUMP from dCTP (dUTP route): step 2/2. Functionally, this enzyme is involved in nucleotide metabolism: it produces dUMP, the immediate precursor of thymidine nucleotides and it decreases the intracellular concentration of dUTP so that uracil cannot be incorporated into DNA. The protein is Deoxyuridine 5'-triphosphate nucleotidohydrolase of Ectopseudomonas mendocina (strain ymp) (Pseudomonas mendocina).